The primary structure comprises 665 residues: Pre-mRNA-processing factor 39 (665 aa).

Over residues 1–11 (MQNSHMEEYRN) the composition is skewed to basic and acidic residues. A disordered region spans residues 1 to 28 (MQNSHMEEYRNSDNGSTGNSSEVAVVEH). Polar residues predominate over residues 12–22 (SDNGSTGNSSE). At serine 44 the chain carries Phosphoserine. HAT repeat units lie at residues 107–139 (NHLM…LEKR), 141–173 (DNIK…FLKE), 181–216 (ETNT…WENE), 218–251 (GNLR…HVQN), 331–363 (FEEG…FEIE), 365–397 (GTHE…YMEN), and 402–434 (GVRH…QQGN). Residues 599–622 (QDTLKRKAENGSEEPEEKKAHTED) show a composition bias toward basic and acidic residues. Positions 599–625 (QDTLKRKAENGSEEPEEKKAHTEDLSS) are disordered.

The protein belongs to the PRP39 family.

The protein resides in the nucleus. In terms of biological role, involved in pre-mRNA splicing. The sequence is that of Pre-mRNA-processing factor 39 (Prpf39) from Mus musculus (Mouse).